A 149-amino-acid chain; its full sequence is Protein K7 (149 aa).

The protein belongs to the orthopoxvirus OPG044 family. Interacts with DDX3; this interaction inhibits DDX3 and suppresses DDX3-mediated IFN-beta promoter induction. Interacts with TRAF6 and IRAK2; these interactions suppress TLR-dependent NF-KappaB activation.

It is found in the host cytoplasm. In terms of biological role, virulence factor that affects the acute immune response to infection. Bcl-2-like protein which, through its interaction with the DEAD box RNA helicase DDX3X/DDX3, prevents TBK1/IKKepsilon-mediated IRF3 activation. Contributes to virulence by binding to the host TRAF6 and IRAK2 and preventing host NF-kappa-B activation. This chain is Protein K7 (OPG044), found in Cynomys gunnisoni (Gunnison's prairie dog).